Consider the following 72-residue polypeptide: Translation initiation factor IF-1 (72 aa).

In terms of domain architecture, S1-like spans 1-72; the sequence is MAKEDCIEME…TKGRIKFRSK (72 aa).

Belongs to the IF-1 family. As to quaternary structure, component of the 30S ribosomal translation pre-initiation complex which assembles on the 30S ribosome in the order IF-2 and IF-3, IF-1 and N-formylmethionyl-tRNA(fMet); mRNA recruitment can occur at any time during PIC assembly.

It localises to the cytoplasm. Its function is as follows. One of the essential components for the initiation of protein synthesis. Stabilizes the binding of IF-2 and IF-3 on the 30S subunit to which N-formylmethionyl-tRNA(fMet) subsequently binds. Helps modulate mRNA selection, yielding the 30S pre-initiation complex (PIC). Upon addition of the 50S ribosomal subunit IF-1, IF-2 and IF-3 are released leaving the mature 70S translation initiation complex. This is Translation initiation factor IF-1 from Francisella tularensis subsp. novicida (strain U112).